We begin with the raw amino-acid sequence, 128 residues long: Calcitonin gene-related peptide 1 (128 aa).

Positions 1 to 25 are cleaved as a signal peptide; sequence MGLWKSSPFLAFSILVLCQAGGLQA. A propeptide spanning residues 26–80 is cleaved from the precursor; that stretch reads APFRSALEGLPDPTALSEKEGRLLLAALVKAYVQRKNELEQEQEQETEGSSITAQ. The segment at 63–83 is disordered; that stretch reads ELEQEQEQETEGSSITAQKRS. The segment covering 74 to 83 has biased composition (polar residues); that stretch reads GSSITAQKRS. An intrachain disulfide couples Cys84 to Cys89. Position 119 is a phenylalanine amide (Phe119). Residues 125-128 constitute a propeptide that is removed on maturation; that stretch reads DLRA.

It belongs to the calcitonin family.

It localises to the secreted. In terms of biological role, CGRP1/CALCA is a peptide hormone that induces vasodilation mediated by the CALCRL-RAMP1 receptor complex. Dilates a variety of vessels including the coronary, cerebral and systemic vasculature. Its abundance in the CNS also points toward a neurotransmitter or neuromodulator role. It also elevates platelet cAMP. CGRP1 can also bind and activate CALCR-RAMP1 (AMYR1) receptor complex. This Canis lupus familiaris (Dog) protein is Calcitonin gene-related peptide 1 (CALCA).